We begin with the raw amino-acid sequence, 322 residues long: HPr kinase/phosphorylase (322 aa).

Catalysis depends on residues H146 and K167. 161–168 provides a ligand contact to ATP; it reads GDSGLGKS. Position 168 (S168) interacts with Mg(2+). D185 acts as the Proton acceptor; for phosphorylation activity. Proton donor; for dephosphorylation activity in catalysis. The segment at 209–218 is important for the catalytic mechanism of both phosphorylation and dephosphorylation; the sequence is LEVRGLGLLD. Position 210 (E210) interacts with Mg(2+). R250 is a catalytic residue. The important for the catalytic mechanism of dephosphorylation stretch occupies residues 271-276; the sequence is QVAAGR.

It belongs to the HPrK/P family. As to quaternary structure, homohexamer. Mg(2+) is required as a cofactor.

The catalysed reaction is [HPr protein]-L-serine + ATP = [HPr protein]-O-phospho-L-serine + ADP + H(+). It catalyses the reaction [HPr protein]-O-phospho-L-serine + phosphate + H(+) = [HPr protein]-L-serine + diphosphate. Functionally, catalyzes the ATP- as well as the pyrophosphate-dependent phosphorylation of a specific serine residue in HPr, a phosphocarrier protein of the phosphoenolpyruvate-dependent sugar phosphotransferase system (PTS). HprK/P also catalyzes the pyrophosphate-producing, inorganic phosphate-dependent dephosphorylation (phosphorolysis) of seryl-phosphorylated HPr (P-Ser-HPr). In Paraburkholderia xenovorans (strain LB400), this protein is HPr kinase/phosphorylase.